We begin with the raw amino-acid sequence, 569 residues long: Rab GTPase-binding effector protein 2 (569 aa).

Disordered regions lie at residues 1–38 (MAAAAPVAADDDERRRRPGAALEDSRPQEGANGEAELG), 181–267 (QRRP…ASLV), and 388–414 (RAEQLPSSAPQGPQQEQGEEESLPSSV). At Ala-2 the chain carries N-acetylalanine. Residues 29-38 (EGANGEAELG) show a composition bias toward low complexity. A coiled-coil region spans residues 34 to 184 (EAELGELSRL…ELIQEIQRRP (151 aa)). Phosphoserine is present on residues Ser-189, Ser-193, Ser-200, and Ser-204. Over residues 245–257 (SSSSLPRSRQGLS) the composition is skewed to low complexity. Positions 292–391 (WEQLQMEGRQ…EENQGLRAEQ (100 aa)) form a coiled coil. Residues 393–403 (PSSAPQGPQQE) are compositionally biased toward low complexity. Residues 423-523 (RTRQEARAQL…LQAELETSEQ (101 aa)) are a coiled coil.

This sequence belongs to the rabaptin family. Heterodimer with RABGEF1. The dimer binds RAB5A that has been activated by GTP-binding. Interacts with SDCCAG8; this interaction is important for ciliogenesis regulation. Interacts with RAB4; this interaction may mediate VEGFR2 cell surface expression.

The protein localises to the cytoplasm. Its subcellular location is the early endosome. It localises to the cytoskeleton. It is found in the microtubule organizing center. The protein resides in the centrosome. The protein localises to the cilium basal body. Functionally, plays a role in membrane trafficking and in homotypic early endosome fusion. Participates in arteriogenesis by regulating vascular endothelial growth factor receptor 2/VEGFR2 cell surface expression and endosomal trafficking. By interacting with SDCCAG8, localizes to centrosomes and plays a critical role in ciliogenesis. This is Rab GTPase-binding effector protein 2 (RABEP2) from Pongo abelii (Sumatran orangutan).